Here is a 316-residue protein sequence, read N- to C-terminus: Lipoyl synthase (316 aa).

Positions 1 to 19 (MRDLKIPEQRHPEKAHRPD) are enriched in basic and acidic residues. A disordered region spans residues 1–31 (MRDLKIPEQRHPEKAHRPDNAQPKKPSWIRV). [4Fe-4S] cluster-binding residues include Cys55, Cys60, Cys66, Cys81, Cys85, Cys88, and Ser295. The Radical SAM core domain occupies 67-284 (WSQGHATMMI…EKAAYGKGFL (218 aa)).

It belongs to the radical SAM superfamily. Lipoyl synthase family. [4Fe-4S] cluster serves as cofactor.

The protein resides in the cytoplasm. The catalysed reaction is [[Fe-S] cluster scaffold protein carrying a second [4Fe-4S](2+) cluster] + N(6)-octanoyl-L-lysyl-[protein] + 2 oxidized [2Fe-2S]-[ferredoxin] + 2 S-adenosyl-L-methionine + 4 H(+) = [[Fe-S] cluster scaffold protein] + N(6)-[(R)-dihydrolipoyl]-L-lysyl-[protein] + 4 Fe(3+) + 2 hydrogen sulfide + 2 5'-deoxyadenosine + 2 L-methionine + 2 reduced [2Fe-2S]-[ferredoxin]. Its pathway is protein modification; protein lipoylation via endogenous pathway; protein N(6)-(lipoyl)lysine from octanoyl-[acyl-carrier-protein]: step 2/2. In terms of biological role, catalyzes the radical-mediated insertion of two sulfur atoms into the C-6 and C-8 positions of the octanoyl moiety bound to the lipoyl domains of lipoate-dependent enzymes, thereby converting the octanoylated domains into lipoylated derivatives. The polypeptide is Lipoyl synthase (Ruegeria sp. (strain TM1040) (Silicibacter sp.)).